The primary structure comprises 179 residues: Shikimate kinase (179 aa).

15 to 20 (GAGKTS) is an ATP binding site. Threonine 19 is a binding site for Mg(2+). Substrate is bound by residues aspartate 37, arginine 61, and glycine 83. Position 122 (arginine 122) interacts with ATP. Arginine 142 is a binding site for substrate.

Belongs to the shikimate kinase family. Monomer. The cofactor is Mg(2+).

It localises to the cytoplasm. The enzyme catalyses shikimate + ATP = 3-phosphoshikimate + ADP + H(+). It participates in metabolic intermediate biosynthesis; chorismate biosynthesis; chorismate from D-erythrose 4-phosphate and phosphoenolpyruvate: step 5/7. In terms of biological role, catalyzes the specific phosphorylation of the 3-hydroxyl group of shikimic acid using ATP as a cosubstrate. In Coxiella burnetii (strain RSA 331 / Henzerling II), this protein is Shikimate kinase.